The sequence spans 514 residues: MPNASQVYRSTRSSSPKTISFEEAIIQGLATDGGLFIPPTIPQVDQATLFNDWSKLSFQDLAFAIMRLYIAQEEIPDADLKDLIKRSYSTFRSDEVTPLVQNVTGDKENLHILELFHGPTYAFKDVALQFVGNLFEYFLQRTNANLPEGEKKQITVVGATSGDTGSAAIYGLRGKKDVSVFILYPTGRISPIQEEQMTTVPDENVQTLSVTGTFDNCQDIVKAIFGDKEFNSKHNVGAVNSINWARILAQMTYYFYSFFQATNGKDSKKVKFVVPSGNFGDILAGYFAKKMGLPIEKLAIATNENDILDRFLKSGLYERSDKVAATLSPAMDILISSNFERLLWYLAREYLANGDDLKAGEIVNNWFQELKTNGKFQVDKSIIEGASKDFTSERVSNEETSETIKKIYESSVNPKHYILDPHTAVGVCATERLIAKDNDKSIQYISLSTAHPAKFADAVNNALSGFSNYSFEKDVLPEELKKLSTLKKKLKFIERADVELVKNAIEEELAKMKL.

Lys-124 carries the N6-(pyridoxal phosphate)lysine modification. Residues Gly-277, Asn-278, Phe-279, Asp-281, and Thr-449 each coordinate pyridoxal 5'-phosphate. Ser-467 carries the post-translational modification Phosphoserine.

It belongs to the threonine synthase family. It depends on pyridoxal 5'-phosphate as a cofactor.

It catalyses the reaction O-phospho-L-homoserine + H2O = L-threonine + phosphate. It participates in amino-acid biosynthesis; L-threonine biosynthesis; L-threonine from L-aspartate: step 5/5. In terms of biological role, catalyzes the gamma-elimination of phosphate from L-phosphohomoserine and the beta-addition of water to produce L-threonine. The sequence is that of Threonine synthase (THR4) from Saccharomyces cerevisiae (strain ATCC 204508 / S288c) (Baker's yeast).